Reading from the N-terminus, the 472-residue chain is Pyruvate kinase (472 aa).

Residue Arg-33 coordinates substrate. K(+) contacts are provided by Asn-35, Ser-37, and Asp-67. Position 35 to 38 (35 to 38 (NFSH)) interacts with ATP. 2 residues coordinate ATP: Arg-74 and Lys-155. A Mg(2+)-binding site is contributed by Glu-220. Substrate is bound by residues Gly-243, Asp-244, and Thr-276. Position 244 (Asp-244) interacts with Mg(2+).

It belongs to the pyruvate kinase family. In terms of assembly, homotetramer. Mg(2+) serves as cofactor. K(+) is required as a cofactor.

It catalyses the reaction pyruvate + ATP = phosphoenolpyruvate + ADP + H(+). Its pathway is carbohydrate degradation; glycolysis; pyruvate from D-glyceraldehyde 3-phosphate: step 5/5. In Mycobacterium intracellulare, this protein is Pyruvate kinase (pyk).